We begin with the raw amino-acid sequence, 284 residues long: 2-dehydro-3-deoxyphosphooctonate aldolase (284 aa).

Belongs to the KdsA family.

The protein localises to the cytoplasm. The catalysed reaction is D-arabinose 5-phosphate + phosphoenolpyruvate + H2O = 3-deoxy-alpha-D-manno-2-octulosonate-8-phosphate + phosphate. It participates in carbohydrate biosynthesis; 3-deoxy-D-manno-octulosonate biosynthesis; 3-deoxy-D-manno-octulosonate from D-ribulose 5-phosphate: step 2/3. The protein operates within bacterial outer membrane biogenesis; lipopolysaccharide biosynthesis. The protein is 2-dehydro-3-deoxyphosphooctonate aldolase of Citrobacter koseri (strain ATCC BAA-895 / CDC 4225-83 / SGSC4696).